The chain runs to 505 residues: Maturase K (505 aa).

Belongs to the intron maturase 2 family. MatK subfamily.

It is found in the plastid. The protein resides in the chloroplast. Functionally, usually encoded in the trnK tRNA gene intron. Probably assists in splicing its own and other chloroplast group II introns. This is Maturase K from Froelichia floridana (Florida snake-cotton).